Here is a 304-residue protein sequence, read N- to C-terminus: Cell surface-binding protein OPG105 (304 aa).

The Alpha-carbonic anhydrase domain occupies 1-235 (MPQQLSPINI…NDDTQVYYSG (235 aa)). The Virion surface segment spans residues 1–275 (MPQQLSPINI…YQKYIEGNKT (275 aa)). The chain crosses the membrane as a helical span at residues 276 to 294 (FAIIAIVFVFILTAILFLM). Over 295–304 (SRRYSREKQN) the chain is Intravirion.

The protein belongs to the alpha-carbonic anhydrase family. As to quaternary structure, homodimer; disulfide-linked. In terms of processing, apparently non-glycosylated.

It is found in the virion membrane. In terms of biological role, binds to chondroitin sulfate on the cell surface to provide virion attachment to target cell. The polypeptide is Cell surface-binding protein OPG105 (OPG105) (Rabbitpox virus (strain Utrecht) (RPV)).